The following is a 114-amino-acid chain: MTCKMSQLERNIETIINTFHQYSVKLGHPDTLNQGEFKELVRKDLQNFLKKENKNEKVIEHIMEDLDTNADKQLSFEEFIMLMARLTWASHEKMHEGDEGPGHHHKPGLGEGTP.

Thr2 carries the blocked amino end (Thr) modification. Cys3 is subject to S-nitrosocysteine; transient. EF-hand domains lie at Ile12–Asn47 and Lys54–Ala89. A Zn(2+)-binding site is contributed by His20. Residues Ser23, Leu26, and His28 each coordinate Ca(2+). Asp30 serves as a coordination point for Zn(2+). Positions 31, 36, 67, 69, 71, 73, and 78 each coordinate Ca(2+). The Zn(2+) site is built by His91 and His95. The segment covering Lys93–Gly102 has biased composition (basic and acidic residues). The interval Lys93–Pro114 is disordered. Residue His105 is modified to Pros-methylhistidine. Position 113 is a phosphothreonine; by MAPK14 (Thr113).

As to quaternary structure, homodimer. Preferentially exists as a heterodimer or heterotetramer with S100A8 known as calprotectin (S100A8/A9). S100A9 interacts with ATP2A2. S100A9 interacts with AGER, and with the heterodimeric complex formed by TLR4 and LY96 in the presence of calcium and/or zinc ions. S100A9 binds quinoline-3-carboxamides in the presence of calcium and/or zinc ions. S100A9 interacts with amyloid-beta protein 40. Calprotectin (S100A8/9) interacts with CEACAM3 and tubulin filaments in a calcium-dependent manner. Heterotetrameric calprotectin (S100A8/A9) interacts with ANXA6 and associates with tubulin filaments in activated monocytes. Calprotectin (S100A8/9) interacts with NCF2/P67PHOX, RAC1, RAC2, CYBA and CYBB. Calprotectin (S100A8/9) interacts with NOS2 to form the iNOS-S100A8/A9 transnitrosylase complex; induced by LDL(ox). Calprotectin (S100A8/9) interacts with CD69. Post-translationally, phosphorylated. Phosphorylation inhibits activation of tubulin polymerization. S-nitrosylation of Cys-3 is implicated in LDL(ox)-induced S-nitrosylation of GAPDH at 'Cys-247' through a transnitrosylase mechanism involving a iNOS-S100A8/9 complex. In terms of processing, methylation at His-105 by METTL9 reduces zinc-binding without affecting heterodimerization with S100A8. As to expression, calprotectin (S100A8/9) is predominantly expressed in myeloid cells. Except for inflammatory conditions, the expression is restricted to a specific stage of myeloid differentiation since both proteins are expressed in circulating neutrophils and monocytes but are absent in normal tissue macrophages and lymphocytes. Under chronic inflammatory conditions, such as psoriasis and malignant disorders, also expressed in the epidermis. Found in high concentrations at local sites of inflammation or in the serum of patients with inflammatory diseases such as rheumatoid, cystic fibrosis, inflammatory bowel disease, Crohn's disease, giant cell arteritis, cystic fibrosis, Sjogren's syndrome, systemic lupus erythematosus, and progressive systemic sclerosis. Involved in the formation and deposition of amyloids in the aging prostate known as corpora amylacea inclusions. Strongly up-regulated in many tumors, including gastric, esophageal, colon, pancreatic, bladder, ovarian, thyroid, breast and skin cancers.

The protein localises to the secreted. It localises to the cytoplasm. It is found in the cytoskeleton. The protein resides in the cell membrane. Its function is as follows. S100A9 is a calcium- and zinc-binding protein which plays a prominent role in the regulation of inflammatory processes and immune response. It can induce neutrophil chemotaxis, adhesion, can increase the bactericidal activity of neutrophils by promoting phagocytosis via activation of SYK, PI3K/AKT, and ERK1/2 and can induce degranulation of neutrophils by a MAPK-dependent mechanism. Predominantly found as calprotectin (S100A8/A9) which has a wide plethora of intra- and extracellular functions. The intracellular functions include: facilitating leukocyte arachidonic acid trafficking and metabolism, modulation of the tubulin-dependent cytoskeleton during migration of phagocytes and activation of the neutrophilic NADPH-oxidase. Also participates in regulatory T-cell differentiation together with CD69. Activates NADPH-oxidase by facilitating the enzyme complex assembly at the cell membrane, transferring arachidonic acid, an essential cofactor, to the enzyme complex and S100A8 contributes to the enzyme assembly by directly binding to NCF2/P67PHOX. The extracellular functions involve pro-inflammatory, antimicrobial, oxidant-scavenging and apoptosis-inducing activities. Its pro-inflammatory activity includes recruitment of leukocytes, promotion of cytokine and chemokine production, and regulation of leukocyte adhesion and migration. Acts as an alarmin or a danger associated molecular pattern (DAMP) molecule and stimulates innate immune cells via binding to pattern recognition receptors such as Toll-like receptor 4 (TLR4) and receptor for advanced glycation endproducts (AGER). Binding to TLR4 and AGER activates the MAP-kinase and NF-kappa-B signaling pathways resulting in the amplification of the pro-inflammatory cascade. Has antimicrobial activity towards bacteria and fungi and exerts its antimicrobial activity probably via chelation of Zn(2+) which is essential for microbial growth. Can induce cell death via autophagy and apoptosis and this occurs through the cross-talk of mitochondria and lysosomes via reactive oxygen species (ROS) and the process involves BNIP3. Can regulate neutrophil number and apoptosis by an anti-apoptotic effect; regulates cell survival via ITGAM/ITGB and TLR4 and a signaling mechanism involving MEK-ERK. Its role as an oxidant scavenger has a protective role in preventing exaggerated tissue damage by scavenging oxidants. Can act as a potent amplifier of inflammation in autoimmunity as well as in cancer development and tumor spread. Has transnitrosylase activity; in oxidatively-modified low-densitity lipoprotein (LDL(ox))-induced S-nitrosylation of GAPDH on 'Cys-247' proposed to transfer the NO moiety from NOS2/iNOS to GAPDH via its own S-nitrosylated Cys-3. The iNOS-S100A8/A9 transnitrosylase complex is proposed to also direct selective inflammatory stimulus-dependent S-nitrosylation of multiple targets such as ANXA5, EZR, MSN and VIM by recognizing a [IL]-x-C-x-x-[DE] motif. This Homo sapiens (Human) protein is Protein S100-A9.